A 513-amino-acid polypeptide reads, in one-letter code: ATP synthase subunit alpha (513 aa).

169 to 176 contributes to the ATP binding site; sequence GDRQTGKS.

It belongs to the ATPase alpha/beta chains family. In terms of assembly, F-type ATPases have 2 components, CF(1) - the catalytic core - and CF(0) - the membrane proton channel. CF(1) has five subunits: alpha(3), beta(3), gamma(1), delta(1), epsilon(1). CF(0) has three main subunits: a(1), b(2) and c(9-12). The alpha and beta chains form an alternating ring which encloses part of the gamma chain. CF(1) is attached to CF(0) by a central stalk formed by the gamma and epsilon chains, while a peripheral stalk is formed by the delta and b chains.

The protein resides in the cell inner membrane. It carries out the reaction ATP + H2O + 4 H(+)(in) = ADP + phosphate + 5 H(+)(out). Produces ATP from ADP in the presence of a proton gradient across the membrane. The alpha chain is a regulatory subunit. The protein is ATP synthase subunit alpha of Blochmanniella floridana.